The primary structure comprises 122 residues: Large ribosomal subunit protein bL12 (122 aa).

This sequence belongs to the bacterial ribosomal protein bL12 family. In terms of assembly, homodimer. Part of the ribosomal stalk of the 50S ribosomal subunit. Forms a multimeric L10(L12)X complex, where L10 forms an elongated spine to which 2 to 4 L12 dimers bind in a sequential fashion. Binds GTP-bound translation factors.

In terms of biological role, forms part of the ribosomal stalk which helps the ribosome interact with GTP-bound translation factors. Is thus essential for accurate translation. The sequence is that of Large ribosomal subunit protein bL12 from Streptococcus thermophilus (strain ATCC BAA-491 / LMD-9).